A 715-amino-acid chain; its full sequence is Elongation factor G (715 aa).

One can recognise a tr-type G domain in the interval 8-290 (NRYRNIGICA…AVIDFLPAPT (283 aa)). GTP contacts are provided by residues 17–24 (AHVDAGKT), 88–92 (DTPGH), and 142–145 (NKMD).

This sequence belongs to the TRAFAC class translation factor GTPase superfamily. Classic translation factor GTPase family. EF-G/EF-2 subfamily.

The protein localises to the cytoplasm. In terms of biological role, catalyzes the GTP-dependent ribosomal translocation step during translation elongation. During this step, the ribosome changes from the pre-translocational (PRE) to the post-translocational (POST) state as the newly formed A-site-bound peptidyl-tRNA and P-site-bound deacylated tRNA move to the P and E sites, respectively. Catalyzes the coordinated movement of the two tRNA molecules, the mRNA and conformational changes in the ribosome. This Ectopseudomonas mendocina (strain ymp) (Pseudomonas mendocina) protein is Elongation factor G.